The chain runs to 955 residues: Aminopeptidase A (955 aa).

The Cytoplasmic portion of the chain corresponds to 1-17; it reads MDIEDKSSKMHCMKGKH. The helical; Signal-anchor for type II membrane protein transmembrane segment at 18-38 threads the bilayer; it reads VAIICGVVIAVGLILGLGLGL. The Extracellular segment spans residues 39-955; that stretch reads GLKPEACNPP…LENSEQPNFV (917 aa). Residues 49 to 69 form a disordered region; that stretch reads EDNGLLSTKPPTTSTPNVTNP. Positions 55 to 69 are enriched in low complexity; the sequence is STKPPTTSTPNVTNP. N-linked (GlcNAc...) asparagine glycosylation is found at N65, N118, and N192. E218 serves as a coordination point for substrate. N-linked (GlcNAc...) asparagine glycans are attached at residues N312, N319, and N335. A substrate-binding site is contributed by 352-356; the sequence is GAMEN. Residue H388 participates in Zn(2+) binding. Catalysis depends on E389, which acts as the Proton acceptor. Zn(2+) is bound by residues H392 and E411. Residues N458, N547, N584, N592, N647, N674, N681, N759, N766, N823, and N836 are each glycosylated (N-linked (GlcNAc...) asparagine). Residue R882 participates in substrate binding.

It belongs to the peptidase M1 family. As to quaternary structure, homodimer; disulfide-linked. Zn(2+) serves as cofactor.

Its subcellular location is the cell membrane. It carries out the reaction Release of N-terminal glutamate (and to a lesser extent aspartate) from a peptide.. With respect to regulation, the partially purified protein is inhibited by the aminopeptidase competitive inhibitors amastatin (Leu and acidic inhibitor), and bestatin (Leu inhibitor), by chelating agents EDTA, and 1,10-Phenanthroline, as well as by Zn(2+) ions. Substrate specificity is modulated by Ca(2+), Ba(2+), and Mn(2+) ions which enhances the enzymatic activity for cleavage of acidic residues. In terms of biological role, venom protein that cleaves N-terminal acidic residues from peptides with high potency in presence of calcium. It may have several roles in venom including alteration of blood pressure by cleaving circulating angiotensin-2, general degradation of host tissue, increase of permeability to other venom components, and/or processing of other toxins in the venom. In Gloydius brevicauda (Korean slamosa snake), this protein is Aminopeptidase A.